The following is a 677-amino-acid chain: Protein windpipe (677 aa).

The signal sequence occupies residues Met1–Ala20. The Extracellular portion of the chain corresponds to Thr21–Ala451. 2 N-linked (GlcNAc...) asparagine glycosylation sites follow: Asn53 and Asn80. 4 LRR repeats span residues Leu91–Arg116, Asn118–Pro133, Gln134–Met156, and Gln158–Val183. Residues Asn145 and Asn170 are each glycosylated (N-linked (GlcNAc...) asparagine). One can recognise an LRRCT domain in the interval Glu184 to Lys216. 3 disordered regions span residues Ala264–Leu285, Thr298–Ser317, and Lys325–Ser385. Basic and acidic residues predominate over residues Ser347 to Glu372. The segment covering Pro374–Ser385 has biased composition (polar residues). A helical membrane pass occupies residues Ile452–Ile472. The Cytoplasmic segment spans residues Lys473–His677. 2 disordered regions span residues Leu502–Glu523 and Asn539–His677. Over residues Ala595–Glu607 the composition is skewed to low complexity.

As to quaternary structure, interacts with dome; the interaction promotes internalization of dome and its subsequent lysosomal degradation. As to expression, in adult intestine, expressed in both small progenitor cells and large nuclei enterocytes (at protein level). During embryogenesis, restricted to the developing trachea.

The protein resides in the cell membrane. In terms of biological role, plays a role in negative regulation of the JAK/STAT pathway by binding to the receptor dome and promoting its internalization for subsequent lysosomal degradation, thereby reducing JAK/STAT signaling. The sequence is that of Protein windpipe from Drosophila melanogaster (Fruit fly).